Reading from the N-terminus, the 589-residue chain is Zinc finger protein 131 (589 aa).

Residues threonine 34–glycine 98 form the BTB domain. The short motif at threonine 137–alanine 148 is the Nuclear localization signal 1 element. The segment covering glycine 224–glycine 234 has biased composition (basic and acidic residues). The tract at residues glycine 224–lysine 247 is disordered. C2H2-type zinc fingers lie at residues phenylalanine 254–histidine 277 and histidine 294–histidine 316. Residues lysine 255 and lysine 261 each participate in a glycyl lysine isopeptide (Lys-Gly) (interchain with G-Cter in SUMO2) cross-link. Residues valine 283–histidine 294 carry the Nuclear localization signal 2 motif. The C2H2-type 3; degenerate zinc finger occupies phenylalanine 322–glycine 347. 2 C2H2-type zinc fingers span residues tyrosine 358 to histidine 380 and asparagine 386 to histidine 409. Over residues asparagine 539–threonine 583 the composition is skewed to basic and acidic residues. The tract at residues asparagine 539–glutamate 589 is disordered. Lysine 567 participates in a covalent cross-link: Glycyl lysine isopeptide (Lys-Gly) (interchain with G-Cter in SUMO).

Belongs to the krueppel C2H2-type zinc-finger protein family. Monosumoylated at Lys-567 by CBX4 and UHRF2. Sumoylation may potentiate ZNF131 inhibition of estrogen signaling. Sumoylation does not interfere with ubiquitination. In terms of processing, ubiquitinated.

It localises to the nucleus. Its function is as follows. May be involved in transcriptional regulation as a repressor of ESR1/ER-alpha signaling. Plays a role during development and organogenesis as well as in the function of the adult central nervous system. The sequence is that of Zinc finger protein 131 (ZNF131) from Pongo abelii (Sumatran orangutan).